A 182-amino-acid chain; its full sequence is Ribosome-recycling factor (182 aa).

Belongs to the RRF family.

It is found in the cytoplasm. Its function is as follows. Responsible for the release of ribosomes from messenger RNA at the termination of protein biosynthesis. May increase the efficiency of translation by recycling ribosomes from one round of translation to another. In Gloeobacter violaceus (strain ATCC 29082 / PCC 7421), this protein is Ribosome-recycling factor.